A 476-amino-acid chain; its full sequence is Trigger factor (476 aa).

Positions 169–254 (GDKVTLDYVG…VKEVAAAEEL (86 aa)) constitute a PPIase FKBP-type domain. Residues 437–476 (SRDELLAEDEAEGEEKKAAGETKKKAAPKKKAAKKESAAE) are disordered. Positions 450–460 (EEKKAAGETKK) are enriched in basic and acidic residues.

It belongs to the FKBP-type PPIase family. Tig subfamily.

It is found in the cytoplasm. The enzyme catalyses [protein]-peptidylproline (omega=180) = [protein]-peptidylproline (omega=0). Its function is as follows. Involved in protein export. Acts as a chaperone by maintaining the newly synthesized protein in an open conformation. Functions as a peptidyl-prolyl cis-trans isomerase. This Chelativorans sp. (strain BNC1) protein is Trigger factor.